An 83-amino-acid polypeptide reads, in one-letter code: MVLAVDLLNPSHESEMRKHKLKQLVQGPRSFFMDVKCPGCFNITTVFSHAQTVVICGSCASVLCQPTGGKARLMEGCSFRRKN.

The C4-type zinc finger occupies 37 to 59; it reads CPGCFNITTVFSHAQTVVICGSC.

Belongs to the eukaryotic ribosomal protein eS27 family. As to quaternary structure, component of the small ribosomal subunit (SSU). Mature yeast ribosomes consist of a small (40S) and a large (60S) subunit. The 40S small subunit contains 1 molecule of ribosomal RNA (18S rRNA) and at least 33 different proteins. The large 60S subunit contains 3 rRNA molecules (25S, 5.8S and 5S rRNA) and at least 46 different proteins. Zn(2+) is required as a cofactor.

The protein localises to the cytoplasm. Component of the ribosome, a large ribonucleoprotein complex responsible for the synthesis of proteins in the cell. The small ribosomal subunit (SSU) binds messenger RNAs (mRNAs) and translates the encoded message by selecting cognate aminoacyl-transfer RNA (tRNA) molecules. The large subunit (LSU) contains the ribosomal catalytic site termed the peptidyl transferase center (PTC), which catalyzes the formation of peptide bonds, thereby polymerizing the amino acids delivered by tRNAs into a polypeptide chain. The nascent polypeptides leave the ribosome through a tunnel in the LSU and interact with protein factors that function in enzymatic processing, targeting, and the membrane insertion of nascent chains at the exit of the ribosomal tunnel. The protein is Small ribosomal subunit protein eS27 (rps27) of Schizosaccharomyces pombe (strain 972 / ATCC 24843) (Fission yeast).